A 458-amino-acid chain; its full sequence is Serine protease Do-like HtrB (458 aa).

A compositionally biased stretch (basic and acidic residues) spans 1-18 (MDYRRDGQNDQHQTEPSH). The tract at residues 1–42 (MDYRRDGQNDQHQTEPSHTEQQNTENQKLIGHSEQELLDAPV) is disordered. Residues 1 to 71 (MDYRRDGQND…TAVKKEKKRR (71 aa)) lie on the Cytoplasmic side of the membrane. Residues 72-92 (AAWLSPILGGIIGGGLMLGIA) traverse the membrane as a helical segment. Topologically, residues 93 to 458 (PYLPSDQNQA…LTKQTESSSS (366 aa)) are extracellular. The tract at residues 146–170 (QTSQNNTFGTGGGSSSESESGTGSG) is disordered. Active-site charge relay system residues include histidine 187, aspartate 217, and serine 298. Substrate contacts are provided by residues 296–298 (GNS) and 352–356 (LGVQM). The PDZ domain maps to 356-440 (MIDMSQVPET…KTTIQVLRKG (85 aa)).

Belongs to the peptidase S1C family.

It localises to the cell membrane. The catalysed reaction is Acts on substrates that are at least partially unfolded. The cleavage site P1 residue is normally between a pair of hydrophobic residues, such as Val-|-Val.. Functionally, degrades abnormal exported proteins and responsible for the propeptide processing of a natural pro-protein and for the maturation of a native protein. It also plays a prominent role in stress (heat shock, ethanol, puromycin and NaCl) resistance during active exponential growth. The sequence is that of Serine protease Do-like HtrB (htrB) from Bacillus subtilis (strain 168).